The chain runs to 230 residues: Cytochrome b6-f complex iron-sulfur subunit, chloroplastic (230 aa).

A chloroplast-targeting transit peptide spans 1–50 (MSSTTLSPTTPSQLCSGKSGISCPSIALLVKPTRTQMTGRGNKGMKITCQ). Residues 72 to 92 (LLGALSLPTAGMLVPYGSFLV) traverse the membrane as a helical segment. Residues 115–213 (ATEWLKTHAP…VGVEDGKVVF (99 aa)) enclose the Rieske domain. [2Fe-2S] cluster-binding residues include C157, H159, C175, and H178. A disulfide bridge links C162 with C177.

This sequence belongs to the Rieske iron-sulfur protein family. As to quaternary structure, the 4 large subunits of the cytochrome b6-f complex are cytochrome b6, subunit IV (17 kDa polypeptide, petD), cytochrome f and the Rieske protein, while the 4 small subunits are petG, petL, petM and petN. The complex functions as a dimer. Requires [2Fe-2S] cluster as cofactor.

The protein resides in the plastid. Its subcellular location is the chloroplast thylakoid membrane. The catalysed reaction is 2 oxidized [plastocyanin] + a plastoquinol + 2 H(+)(in) = 2 reduced [plastocyanin] + a plastoquinone + 4 H(+)(out). In terms of biological role, component of the cytochrome b6-f complex, which mediates electron transfer between photosystem II (PSII) and photosystem I (PSI), cyclic electron flow around PSI, and state transitions. This is Cytochrome b6-f complex iron-sulfur subunit, chloroplastic (petC) from Pisum sativum (Garden pea).